A 200-amino-acid polypeptide reads, in one-letter code: Imidazole glycerol phosphate synthase subunit HisH (200 aa).

Residues 2 to 200 (KVAIVEYGVG…LGEVLTGASR (199 aa)) enclose the Glutamine amidotransferase type-1 domain. Residue Cys-79 is the Nucleophile of the active site. Catalysis depends on residues His-179 and Glu-181.

As to quaternary structure, heterodimer of HisH and HisF.

It localises to the cytoplasm. The enzyme catalyses 5-[(5-phospho-1-deoxy-D-ribulos-1-ylimino)methylamino]-1-(5-phospho-beta-D-ribosyl)imidazole-4-carboxamide + L-glutamine = D-erythro-1-(imidazol-4-yl)glycerol 3-phosphate + 5-amino-1-(5-phospho-beta-D-ribosyl)imidazole-4-carboxamide + L-glutamate + H(+). The catalysed reaction is L-glutamine + H2O = L-glutamate + NH4(+). Its pathway is amino-acid biosynthesis; L-histidine biosynthesis; L-histidine from 5-phospho-alpha-D-ribose 1-diphosphate: step 5/9. Its function is as follows. IGPS catalyzes the conversion of PRFAR and glutamine to IGP, AICAR and glutamate. The HisH subunit catalyzes the hydrolysis of glutamine to glutamate and ammonia as part of the synthesis of IGP and AICAR. The resulting ammonia molecule is channeled to the active site of HisF. In Methanopyrus kandleri (strain AV19 / DSM 6324 / JCM 9639 / NBRC 100938), this protein is Imidazole glycerol phosphate synthase subunit HisH.